Here is an 803-residue protein sequence, read N- to C-terminus: Translation initiation factor IF-2 (803 aa).

A compositionally biased stretch (basic and acidic residues) spans 65–75 (PDKVEEKKEHT). Positions 65–186 (PDKVEEKKEH…PKSRKSKTLK (122 aa)) are disordered. Positions 175 to 185 (NKPKSRKSKTL) are enriched in basic residues. Positions 300–468 (IRPPVVTIMG…ILLTADAALE (169 aa)) constitute a tr-type G domain. The segment at 309 to 316 (GHVDHGKT) is G1. Residue 309-316 (GHVDHGKT) coordinates GTP. The segment at 334-338 (GITQH) is G2. A G3 region spans residues 355-358 (DTPG). GTP contacts are provided by residues 355 to 359 (DTPGH) and 409 to 412 (NKID). The segment at 409–412 (NKID) is G4. A G5 region spans residues 445 to 447 (SAK).

The protein belongs to the TRAFAC class translation factor GTPase superfamily. Classic translation factor GTPase family. IF-2 subfamily.

The protein resides in the cytoplasm. One of the essential components for the initiation of protein synthesis. Protects formylmethionyl-tRNA from spontaneous hydrolysis and promotes its binding to the 30S ribosomal subunits. Also involved in the hydrolysis of GTP during the formation of the 70S ribosomal complex. In Tropheryma whipplei (strain Twist) (Whipple's bacillus), this protein is Translation initiation factor IF-2.